The primary structure comprises 1213 residues: DNA-directed RNA polymerase subunit beta' (1213 aa).

The Zn(2+) site is built by C60, C62, C75, and C78. Positions 450, 452, and 454 each coordinate Mg(2+). Zn(2+)-binding residues include C819, C893, C900, and C903.

The protein belongs to the RNA polymerase beta' chain family. As to quaternary structure, the RNAP catalytic core consists of 2 alpha, 1 beta, 1 beta' and 1 omega subunit. When a sigma factor is associated with the core the holoenzyme is formed, which can initiate transcription. Requires Mg(2+) as cofactor. Zn(2+) is required as a cofactor.

The enzyme catalyses RNA(n) + a ribonucleoside 5'-triphosphate = RNA(n+1) + diphosphate. Functionally, DNA-dependent RNA polymerase catalyzes the transcription of DNA into RNA using the four ribonucleoside triphosphates as substrates. This Streptococcus pyogenes serotype M28 (strain MGAS6180) protein is DNA-directed RNA polymerase subunit beta'.